A 241-amino-acid chain; its full sequence is Carboxy-S-adenosyl-L-methionine synthase (241 aa).

Residues Y38, 63–65 (GCS), 88–89 (DN), 116–117 (DI), N131, and R198 contribute to the S-adenosyl-L-methionine site.

This sequence belongs to the class I-like SAM-binding methyltransferase superfamily. Cx-SAM synthase family. In terms of assembly, homodimer.

The catalysed reaction is prephenate + S-adenosyl-L-methionine = carboxy-S-adenosyl-L-methionine + 3-phenylpyruvate + H2O. Functionally, catalyzes the conversion of S-adenosyl-L-methionine (SAM) to carboxy-S-adenosyl-L-methionine (Cx-SAM). The polypeptide is Carboxy-S-adenosyl-L-methionine synthase (Histophilus somni (strain 2336) (Haemophilus somnus)).